Consider the following 78-residue polypeptide: Large ribosomal subunit protein bL28 (78 aa).

It belongs to the bacterial ribosomal protein bL28 family.

The chain is Large ribosomal subunit protein bL28 from Dichelobacter nodosus (strain VCS1703A).